The primary structure comprises 563 residues: Putative GMC-type oxidoreductase L128 (563 aa).

Residues 1–21 (MTSSIVLKFFLIATLLVIANS) form the signal peptide. Residue 48–77 (DYVIVGGGAAGSVLLDKCISYGYKCTLIER) coordinates FAD. The active-site Proton acceptor is His504.

This sequence belongs to the GMC oxidoreductase family. FAD serves as cofactor.

The protein is Putative GMC-type oxidoreductase L128 of Acanthamoeba polyphaga mimivirus (APMV).